The primary structure comprises 542 residues: Anaerobic glycerol-3-phosphate dehydrogenase subunit A (542 aa).

FAD is bound at residue 10–38; it reads DVIIIGGGATGAGIARDCALRGLRVILVE.

It belongs to the FAD-dependent glycerol-3-phosphate dehydrogenase family. In terms of assembly, composed of a catalytic GlpA/B dimer and of membrane bound GlpC. The cofactor is FAD. It depends on FMN as a cofactor.

Its subcellular location is the cell inner membrane. It carries out the reaction a quinone + sn-glycerol 3-phosphate = dihydroxyacetone phosphate + a quinol. Its pathway is polyol metabolism; glycerol degradation via glycerol kinase pathway; glycerone phosphate from sn-glycerol 3-phosphate (anaerobic route): step 1/1. Functionally, conversion of glycerol 3-phosphate to dihydroxyacetone. Uses fumarate or nitrate as electron acceptor. The protein is Anaerobic glycerol-3-phosphate dehydrogenase subunit A (glpA) of Escherichia coli O157:H7.